The primary structure comprises 317 residues: Acetyl-coenzyme A carboxylase carboxyl transferase subunit alpha (317 aa).

Residues R31–S292 form the CoA carboxyltransferase C-terminal domain.

The protein belongs to the AccA family. In terms of assembly, acetyl-CoA carboxylase is a heterohexamer composed of biotin carboxyl carrier protein (AccB), biotin carboxylase (AccC) and two subunits each of ACCase subunit alpha (AccA) and ACCase subunit beta (AccD).

It localises to the cytoplasm. The catalysed reaction is N(6)-carboxybiotinyl-L-lysyl-[protein] + acetyl-CoA = N(6)-biotinyl-L-lysyl-[protein] + malonyl-CoA. The protein operates within lipid metabolism; malonyl-CoA biosynthesis; malonyl-CoA from acetyl-CoA: step 1/1. Component of the acetyl coenzyme A carboxylase (ACC) complex. First, biotin carboxylase catalyzes the carboxylation of biotin on its carrier protein (BCCP) and then the CO(2) group is transferred by the carboxyltransferase to acetyl-CoA to form malonyl-CoA. In Sorangium cellulosum (strain So ce56) (Polyangium cellulosum (strain So ce56)), this protein is Acetyl-coenzyme A carboxylase carboxyl transferase subunit alpha.